The following is a 294-amino-acid chain: Large ribosomal subunit protein uL2c (294 aa).

The tract at residues 224–249 (VMNPVDHPHGGGGEGKSPIGRSRPVT) is disordered.

This sequence belongs to the universal ribosomal protein uL2 family. As to quaternary structure, part of the 50S ribosomal subunit.

The protein localises to the plastid. It is found in the chloroplast. This chain is Large ribosomal subunit protein uL2c (rpl2), found in Porphyra purpurea (Red seaweed).